Consider the following 204-residue polypeptide: N-(5'-phosphoribosyl)anthranilate isomerase (204 aa).

Belongs to the TrpF family.

It carries out the reaction N-(5-phospho-beta-D-ribosyl)anthranilate = 1-(2-carboxyphenylamino)-1-deoxy-D-ribulose 5-phosphate. It functions in the pathway amino-acid biosynthesis; L-tryptophan biosynthesis; L-tryptophan from chorismate: step 3/5. This is N-(5'-phosphoribosyl)anthranilate isomerase from Syntrophomonas wolfei subsp. wolfei (strain DSM 2245B / Goettingen).